The following is a 184-amino-acid chain: Uroplakin-2 (184 aa).

A signal peptide spans 1 to 25; sequence MASPLPVRTLPLILILLAVLAPGAS. Residues 26-84 constitute a propeptide that is removed on maturation; that stretch reads DFNISSLSGPLSPALTESLLVALPPCHLTGGNATLMVRRANDSKVVKSSFMVPPCRGRR. Residues N28, N57, and N66 are each glycosylated (N-linked (GlcNAc...) asparagine). The Lumenal portion of the chain corresponds to 85–155; that stretch reads ELVSVVDSGS…IGLGMARTGG (71 aa). Residues 156-180 form a helical membrane-spanning segment; the sequence is MVVITVLLSVAMFLLVVGFITALAL. Residues 181 to 184 lie on the Cytoplasmic side of the membrane; that stretch reads GARK.

Belongs to the uroplakin-2 family. Interacts with uroplakin-1a (UPK1A). Expressed only in the urothelium. Localizes to urothelial superficial cells.

The protein resides in the cell membrane. Its function is as follows. Component of the asymmetric unit membrane (AUM); a highly specialized biomembrane elaborated by terminally differentiated urothelial cells. May play an important role in regulating the assembly of the AUM. The polypeptide is Uroplakin-2 (UPK2) (Sus scrofa (Pig)).